The following is a 160-amino-acid chain: Cytochrome b6-f complex subunit 4 (160 aa).

Transmembrane regions (helical) follow at residues 36–56 (LLYI…GLAV), 95–115 (LLGV…PFLE), and 131–151 (TVFL…TLPI).

This sequence belongs to the cytochrome b family. PetD subfamily. The 4 large subunits of the cytochrome b6-f complex are cytochrome b6, subunit IV (17 kDa polypeptide, petD), cytochrome f and the Rieske protein, while the 4 small subunits are petG, petL, petM and petN. The complex functions as a dimer.

Its subcellular location is the plastid. It is found in the chloroplast thylakoid membrane. Component of the cytochrome b6-f complex, which mediates electron transfer between photosystem II (PSII) and photosystem I (PSI), cyclic electron flow around PSI, and state transitions. This is Cytochrome b6-f complex subunit 4 from Sorghum bicolor (Sorghum).